An 834-amino-acid polypeptide reads, in one-letter code: Sodium/hydrogen exchanger 3 (834 aa).

The first 25 residues, M1–A25, serve as a signal peptide directing secretion. Residues G26–H51 lie on the Extracellular side of the membrane. Residues V52–L74 traverse the membrane as a helical segment. Over S75–V82 the chain is Cytoplasmic. Residues P83–A102 form a helical membrane-spanning segment. At D103–T111 the chain is on the extracellular side. A helical transmembrane segment spans residues P112–Y129. Over F130–P132 the chain is Cytoplasmic. Residues N133–S168 form a helical membrane-spanning segment. Residues G138, G141, and T142 each contribute to the a 1,2-diacyl-sn-glycero-3-phospho-(1D-myo-inositol) site. Residues G169–F181 are Extracellular-facing. A helical membrane pass occupies residues L182 to V203. The Cytoplasmic portion of the chain corresponds to H204–V205. The chain crosses the membrane as a helical span at residues N206–L237. At G238–G244 the chain is on the extracellular side. Residue N241 is glycosylated (N-linked (GlcNAc...) asparagine). A helical membrane pass occupies residues V245–T279. Residues K280 to H281 lie on the Cytoplasmic side of the membrane. Residues V282–L304 traverse the membrane as a helical segment. Residues S305–L306 lie on the Extracellular side of the membrane. The chain crosses the membrane as a helical span at residues S307–V323. Residues K324–Q330 lie on the Cytoplasmic side of the membrane. Residues S331–V359 form a helical membrane-spanning segment. Over N360 to N367 the chain is Extracellular. A helical membrane pass occupies residues T368–Q389. Topologically, residues T390–E402 are cytoplasmic. M398 contributes to the a 1,2-diacyl-sn-glycero-3-phospho-(1D-myo-inositol) binding site. Residues P403–L426 traverse the membrane as a helical segment. At D427–E433 the chain is on the extracellular side. Residues K434 to R467 traverse the membrane as a helical segment. Residues S468 to M834 lie on the Cytoplasmic side of the membrane. The a 1,2-diacyl-sn-glycero-3-phospho-(1D-myo-inositol) site is built by Q497, I498, and H500. A phosphoserine mark is found at S555 and S563. An interaction with EZR region spans residues R575–E589. The segment at N590–T667 is interaction with NHERF4. An interaction with AHCYL1 region spans residues V591 to P695. Residues S592 and S607 each carry the phosphoserine modification. The residue at position 663 (S663) is a Phosphoserine; by SGK1. Basic residues predominate over residues K679 to N691. Residues K679 to E728 form a disordered region. A compositionally biased stretch (acidic residues) spans L717 to E728. Phosphoserine occurs at positions 718, 810, and 813. Residues F814–M834 form a disordered region.

Belongs to the monovalent cation:proton antiporter 1 (CPA1) transporter (TC 2.A.36) family. In terms of assembly, homodimer. Found in the forms of complex and dynamic macromolecular complexes. Binds NHERF1 and NHERF2. Interacts with CHP1; increases SLC9A3 trafficking and activity at the plasma membrane. Interacts with CHP2 and SHANK2. Interacts with PDZK1 (via C-terminal PDZ domain). Interacts with NHERF4 and interaction decrease in response to elevated calcium ion levels. Interacts with AHCYL1; the interaction is required for SLC9A3 activity. Interacts with SNX27 (via PDZ domains); directs SLC9A3 membrane insertion from early endosomes to the plasma membrane. Interacts with EZR; interaction targets SLC9A3 to the apical membrane. Phosphorylated by PKA, which inhibits activity. Phosphorylation at Ser-663 by SGK1 is associated with increased abundance at the cell membrane. Phosphorylation at Ser-718 by CSNK2A1 regulates SLC9A3 activity through the formation of multiple signaling complexes.

Its subcellular location is the apical cell membrane. It localises to the cell membrane. The protein localises to the recycling endosome membrane. The protein resides in the early endosome membrane. It catalyses the reaction Na(+)(in) + H(+)(out) = Na(+)(out) + H(+)(in). Seems to switch between active and inactive modes in response to various stimuli. Activated directly or indirectly by membrane phosphatidylinositol (PIs). Regulated by a variety of auxiliary proteins, which facilitate the maturation, cell surface expression and function of the transporter. Inhibited specifically by the drug tenapanor. Its function is as follows. Plasma membrane Na(+)/H(+) antiporter. Exchanges intracellular H(+) ions for extracellular Na(+) in 1:1 stoichiometry, playing a key role in salt and fluid absorption and pH homeostasis. Major apical Na(+)/H(+) exchanger in kidney and intestine playing an important role in renal and intestine Na(+) absorption and blood pressure regulation. This chain is Sodium/hydrogen exchanger 3, found in Homo sapiens (Human).